Here is a 35-residue protein sequence, read N- to C-terminus: Photosystem II reaction center protein T (35 aa).

A helical membrane pass occupies residues 3-23 (ALVYTFLLVSTLGIIFFAIFF).

It belongs to the PsbT family. As to quaternary structure, PSII is composed of 1 copy each of membrane proteins PsbA, PsbB, PsbC, PsbD, PsbE, PsbF, PsbH, PsbI, PsbJ, PsbK, PsbL, PsbM, PsbT, PsbY, PsbZ, Psb30/Ycf12, at least 3 peripheral proteins of the oxygen-evolving complex and a large number of cofactors. It forms dimeric complexes.

The protein resides in the plastid. It localises to the chloroplast thylakoid membrane. Functionally, found at the monomer-monomer interface of the photosystem II (PS II) dimer, plays a role in assembly and dimerization of PSII. PSII is a light-driven water plastoquinone oxidoreductase, using light energy to abstract electrons from H(2)O, generating a proton gradient subsequently used for ATP formation. The chain is Photosystem II reaction center protein T from Schisandra chinensis (Chinese magnolia vine).